Here is a 420-residue protein sequence, read N- to C-terminus: Mannose-1-phosphate guanylyltransferase regulatory subunit alpha (420 aa).

The substrate-binding domain stretch occupies residues 2–251 (LKAVILIGGP…DGIWSQIKSA (250 aa)). GDP-alpha-D-mannose-binding residues include E85 and Q247. Residues 273 to 420 (LAKHTPGGPW…SRSFTNQIIL (148 aa)) form a hexapeptide repeat domain region. Positions 356–384 (TPSDPNPNDPRARMDSESLFKDGKLLPAI) are C-loop.

Belongs to the transferase hexapeptide repeat family. As to quaternary structure, component of the GMPPA-GMPPB mannose-1-phosphate guanylyltransferase complex composed of 4 GMPPA subunits and 8 GMPPB subunits; the complex is organized into three layers, a central layer made up of 2 GMPPA dimers sandwiched between two layers each made up of 2 GMPPB dimers. Expressed in fibroblasts (at protein level).

Its subcellular location is the cytoplasm. In terms of biological role, regulatory subunit of the GMPPA-GMPPB mannose-1-phosphate guanylyltransferase complex; reduces the catalytic activity of GMPPB when part of the complex. Mediates allosteric feedback inhibition of GMPPB catalytic activity upon binding GDP-alpha-D-mannose. Together with GMPPB regulates GDP-alpha-D-mannose levels. The chain is Mannose-1-phosphate guanylyltransferase regulatory subunit alpha from Homo sapiens (Human).